The sequence spans 227 residues: Cytochrome c oxidase subunit 2 (227 aa).

The Mitochondrial intermembrane segment spans residues 1–14; that stretch reads MAYPLQLGFQDAVS. Residues 15–45 traverse the membrane as a helical segment; it reads PIMEELLYFHDHTLMIVFLISSLVLYIITLM. The Mitochondrial matrix portion of the chain corresponds to 46-59; it reads LTTKLTHTNTMNAQ. Residues 60–87 traverse the membrane as a helical segment; the sequence is EVETVWTILPAIILILIALPSLRILYMM. The Mitochondrial intermembrane segment spans residues 88–227; that stretch reads DEINNPSLTV…TFEKWTASLL (140 aa). Positions 161, 196, 198, 200, 204, and 207 each coordinate Cu cation. Glutamate 198 provides a ligand contact to Mg(2+).

This sequence belongs to the cytochrome c oxidase subunit 2 family. In terms of assembly, component of the cytochrome c oxidase (complex IV, CIV), a multisubunit enzyme composed of 14 subunits. The complex is composed of a catalytic core of 3 subunits MT-CO1, MT-CO2 and MT-CO3, encoded in the mitochondrial DNA, and 11 supernumerary subunits COX4I, COX5A, COX5B, COX6A, COX6B, COX6C, COX7A, COX7B, COX7C, COX8 and NDUFA4, which are encoded in the nuclear genome. The complex exists as a monomer or a dimer and forms supercomplexes (SCs) in the inner mitochondrial membrane with NADH-ubiquinone oxidoreductase (complex I, CI) and ubiquinol-cytochrome c oxidoreductase (cytochrome b-c1 complex, complex III, CIII), resulting in different assemblies (supercomplex SCI(1)III(2)IV(1) and megacomplex MCI(2)III(2)IV(2)). Found in a complex with TMEM177, COA6, COX18, COX20, SCO1 and SCO2. Interacts with TMEM177 in a COX20-dependent manner. Interacts with COX20. Interacts with COX16. Cu cation serves as cofactor.

The protein localises to the mitochondrion inner membrane. The catalysed reaction is 4 Fe(II)-[cytochrome c] + O2 + 8 H(+)(in) = 4 Fe(III)-[cytochrome c] + 2 H2O + 4 H(+)(out). Functionally, component of the cytochrome c oxidase, the last enzyme in the mitochondrial electron transport chain which drives oxidative phosphorylation. The respiratory chain contains 3 multisubunit complexes succinate dehydrogenase (complex II, CII), ubiquinol-cytochrome c oxidoreductase (cytochrome b-c1 complex, complex III, CIII) and cytochrome c oxidase (complex IV, CIV), that cooperate to transfer electrons derived from NADH and succinate to molecular oxygen, creating an electrochemical gradient over the inner membrane that drives transmembrane transport and the ATP synthase. Cytochrome c oxidase is the component of the respiratory chain that catalyzes the reduction of oxygen to water. Electrons originating from reduced cytochrome c in the intermembrane space (IMS) are transferred via the dinuclear copper A center (CU(A)) of subunit 2 and heme A of subunit 1 to the active site in subunit 1, a binuclear center (BNC) formed by heme A3 and copper B (CU(B)). The BNC reduces molecular oxygen to 2 water molecules using 4 electrons from cytochrome c in the IMS and 4 protons from the mitochondrial matrix. In Hippopotamus amphibius (Hippopotamus), this protein is Cytochrome c oxidase subunit 2 (MT-CO2).